The sequence spans 266 residues: 2-hydroxyisocaproyl-CoA dehydratase activator (266 aa).

Residues 10 to 14 and 102 to 104 each bind ATP; these read STASK and GQD. Cys125 contributes to the [4Fe-4S] cluster binding site. ATP is bound at residue Asp134. Residue Cys164 coordinates [4Fe-4S] cluster. Gly215 and Gln241 together coordinate ATP.

Belongs to the HadI activator family. As to quaternary structure, homodimer. It depends on [4Fe-4S] cluster as a cofactor.

In terms of biological role, involved in the reductive branch of L-leucine fermentation. Required for the activation of (R)-2-hydroxyisocaproyl-CoA dehydratase. The reduced activator transfers one electron to the dehydratase concomitant with hydrolysis of ATP. This protein is extremely sensitive towards oxygen. This chain is 2-hydroxyisocaproyl-CoA dehydratase activator, found in Clostridioides difficile (Peptoclostridium difficile).